The primary structure comprises 258 residues: Regulatory protein RecX (258 aa).

Belongs to the RecX family.

Its subcellular location is the cytoplasm. Its function is as follows. Modulates RecA activity. The sequence is that of Regulatory protein RecX from Streptococcus pneumoniae (strain Hungary19A-6).